A 153-amino-acid polypeptide reads, in one-letter code: Ribonuclease 2 (153 aa).

It belongs to the BetVI family.

Its subcellular location is the cytoplasm. Functionally, catalyzes the two-stage endonucleolytic cleavage to 3'-phosphomononucleotides and 3'-phosphooligonucleotides with 2',3'-cyclic phosphate intermediates. This is Ribonuclease 2 from Panax ginseng (Korean ginseng).